We begin with the raw amino-acid sequence, 121 residues long: Large ribosomal subunit protein uL14 (121 aa).

The protein belongs to the universal ribosomal protein uL14 family. Part of the 50S ribosomal subunit. Forms a cluster with proteins L3 and L19. In the 70S ribosome, L14 and L19 interact and together make contacts with the 16S rRNA in bridges B5 and B8.

Functionally, binds to 23S rRNA. Forms part of two intersubunit bridges in the 70S ribosome. In Aquifex aeolicus (strain VF5), this protein is Large ribosomal subunit protein uL14.